A 399-amino-acid chain; its full sequence is (R)-2-hydroxy-4-methylpentanoate CoA-transferase (399 aa).

The Nucleophile role is filled by Asp-171.

Belongs to the CoA-transferase III family. As to quaternary structure, homodimer.

The catalysed reaction is 4-methylpentanoyl-CoA + (2R)-hydroxy-4-methylpentanoate = (R)-2-hydroxy-4-methylpentanoyl-CoA + 4-methylpentanoate. The protein operates within amino-acid degradation; L-leucine degradation. In terms of biological role, involved in the reductive branch of L-leucine fermentation. Catalyzes the transfer of the CoA moiety from 4-methylpentanoyl-CoA (isocaproyl-CoA) to (R)-2-hydroxy-4-methylpentanoate ((R)-2-hydroxyisocaproate), leading to the formation of (R)-2-hydroxy-4-methylpentanoyl-CoA. Other CoA thioesters, such as acetyl-CoA or butyryl-CoA, are not accepted as substrates. In Clostridioides difficile (Peptoclostridium difficile), this protein is (R)-2-hydroxy-4-methylpentanoate CoA-transferase.